The following is a 299-amino-acid chain: MTFLKEYVIVSGASGFIGKHLLEALKKSGISVVAITRDVIKNNSNALANVRWCSWDNIELLVEELSIDSALIGIIHLATEYGHKTSSLINIEDANVIKPLKLLDLAIKYRADIFLNTDSFFAKKDFNYQHMRPYIITKRHFDEIGHYYANMHDISFVNMRLEHVYGPGDGENKFIPYIIDCLNKKQSCVKCTTGEQIRDFIFVDDVVNAYLTILENRKEVPSYTEYQVGTGAGVSLKDFLVYLQNTMMPGSSSIFEFGAIEQRDNEIMFSVANNKNLKAMGWKPNFDYKKGIEELLKRL.

Thr117 provides a ligand contact to substrate. The Proton acceptor role is filled by Tyr134.

The protein belongs to the NAD(P)-dependent epimerase/dehydratase family.

It carries out the reaction CDP-alpha-D-abequose + NADP(+) = CDP-4-dehydro-3,6-dideoxy-alpha-D-glucose + NADPH + H(+). It participates in bacterial outer membrane biogenesis; LPS O-antigen biosynthesis. This Salmonella typhimurium (strain LT2 / SGSC1412 / ATCC 700720) protein is CDP-abequose synthase (rfbJ).